Consider the following 143-residue polypeptide: Cell division protein SepF (143 aa).

This sequence belongs to the SepF family. Homodimer. Interacts with FtsZ.

Its subcellular location is the cytoplasm. Cell division protein that is part of the divisome complex and is recruited early to the Z-ring. Probably stimulates Z-ring formation, perhaps through the cross-linking of FtsZ protofilaments. Its function overlaps with FtsA. In Geobacillus thermodenitrificans (strain NG80-2), this protein is Cell division protein SepF.